A 323-amino-acid polypeptide reads, in one-letter code: Germacrene A synthase (323 aa).

Mg(2+) contacts are provided by Asp82, Asp86, Asn222, Ser226, and Glu230. The DDXXD motif signature appears at 82-86 (DDQCD).

Belongs to the terpene synthase family. Mg(2+) serves as cofactor.

It catalyses the reaction (2E,6E)-farnesyl diphosphate = 5-epi-alpha-selinene + diphosphate. Catalyzes the cyclization of farnesyl diphosphate (FPP) to the sesquiterpene germacrene A. This Nostoc punctiforme (strain ATCC 29133 / PCC 73102) protein is Germacrene A synthase.